Here is a 342-residue protein sequence, read N- to C-terminus: [Citrate [pro-3S]-lyase] ligase (342 aa).

The N-acetyltransferase domain occupies 1 to 127; that stretch reads MTLILKRVQL…RAVLMENSRE (127 aa).

The enzyme catalyses holo-[citrate lyase ACP] + acetate + ATP = acetyl-[citrate lyase ACP] + AMP + diphosphate. In terms of biological role, acetylation of prosthetic group (2-(5''-phosphoribosyl)-3'-dephosphocoenzyme-A) of the gamma subunit of citrate lyase. The protein is [Citrate [pro-3S]-lyase] ligase (citC) of Klebsiella pneumoniae.